Reading from the N-terminus, the 1179-residue chain is Pesticidal crystal protein Cry1Ad (1179 aa).

It belongs to the delta endotoxin family.

In terms of biological role, promotes colloidosmotic lysis by binding to the midgut epithelial cells of many lepidopteran larvae. This Bacillus thuringiensis subsp. aizawai protein is Pesticidal crystal protein Cry1Ad (cry1Ad).